A 424-amino-acid polypeptide reads, in one-letter code: O-methyltransferase aunD (424 aa).

S-adenosyl-L-methionine is bound at residue Asp275. The active-site Proton acceptor is His326.

The protein belongs to the class I-like SAM-binding methyltransferase superfamily. Cation-independent O-methyltransferase family.

It functions in the pathway secondary metabolite biosynthesis. In terms of biological role, O-methyltransferase; part of the gene cluster that mediates the biosynthesis of aurasperone B, a dimeric gamma-naphthopyrone. The first step in the biosynthesis of aurasperone B is the production of gamma-naphthopyrone precursor YWA1 by the non-reducing polyketide synthase albA, via condensation of one acetyl-CoA starter unit with 6 malonyl-CoA units. YWA1 is then methylated by aunE at position C-6 to yield foncesin which is further methylated at position C-8 by aunD to produce fonsecin B. A key enzyme in the biosynthetic pathway is the cytochrome P450 monooxygenase aunB which catalyzes the oxidative dimerization of fonsecin B to aurasperone B. AunB also catalyzes the oxidative dimerization of rubrofusarin B into aurasperone A. The sequence is that of O-methyltransferase aunD from Aspergillus niger (strain ATCC MYA-4892 / CBS 513.88 / FGSC A1513).